We begin with the raw amino-acid sequence, 63 residues long: Large ribosomal subunit protein bL35 (63 aa).

Belongs to the bacterial ribosomal protein bL35 family.

The sequence is that of Large ribosomal subunit protein bL35 from Sulfurovum sp. (strain NBC37-1).